Here is a 441-residue protein sequence, read N- to C-terminus: Transcriptional regulatory protein ZraR (441 aa).

Positions 7–121 (DILVVDDDVS…RLQETLEKAL (115 aa)) constitute a Response regulatory domain. Aspartate 56 is modified (4-aspartylphosphate). The region spanning 141–370 (MIGSSPAMQH…LENAIERAVV (230 aa)) is the Sigma-54 factor interaction domain. ATP-binding residues include glycine 172, threonine 173, arginine 329, and arginine 359. Positions 421-440 (KTEAARQLGITRKTLLAKLS) form a DNA-binding region, H-T-H motif.

Post-translationally, phosphorylated by ZraS.

The protein resides in the cytoplasm. Its activity is regulated as follows. Activity of the ZraS/ZraR two-component system is repressed by the zinc-bound form of ZraP, which probably interacts with the periplasmic region of ZraS. Functionally, part of the Zra signaling pathway, an envelope stress response (ESR) system composed of the periplasmic accessory protein ZraP, the histidine kinase ZraS and the transcriptional regulator ZraR. The ZraPSR system contributes to antibiotic resistance and is important for membrane integrity in the presence of membrane-targeting biocides. ZraR is a member of the two-component regulatory system ZraS/ZraR. When activated by ZraS, acts in conjunction with sigma-54 to regulate the expression of zraP in the presence of high Zn(2+) or Pb(2+) concentrations. Also positively autoregulates the expression of the zraSR operon. The chain is Transcriptional regulatory protein ZraR (zraR) from Salmonella typhi.